A 192-amino-acid polypeptide reads, in one-letter code: Orotate phosphoribosyltransferase (192 aa).

A 5-phospho-alpha-D-ribose 1-diphosphate-binding site is contributed by 116–124; the sequence is EDIVTTGLS. Orotate-binding residues include Thr120 and Arg148.

Belongs to the purine/pyrimidine phosphoribosyltransferase family. PyrE subfamily. As to quaternary structure, homodimer. It depends on Mg(2+) as a cofactor.

The enzyme catalyses orotidine 5'-phosphate + diphosphate = orotate + 5-phospho-alpha-D-ribose 1-diphosphate. It participates in pyrimidine metabolism; UMP biosynthesis via de novo pathway; UMP from orotate: step 1/2. Functionally, catalyzes the transfer of a ribosyl phosphate group from 5-phosphoribose 1-diphosphate to orotate, leading to the formation of orotidine monophosphate (OMP). This is Orotate phosphoribosyltransferase from Brucella canis (strain ATCC 23365 / NCTC 10854 / RM-666).